The following is a 272-amino-acid chain: Urease accessory protein UreD (272 aa).

It belongs to the UreD family. As to quaternary structure, ureD, UreF and UreG form a complex that acts as a GTP-hydrolysis-dependent molecular chaperone, activating the urease apoprotein by helping to assemble the nickel containing metallocenter of UreC. The UreE protein probably delivers the nickel.

It localises to the cytoplasm. Functionally, required for maturation of urease via the functional incorporation of the urease nickel metallocenter. The sequence is that of Urease accessory protein UreD from Opitutus terrae (strain DSM 11246 / JCM 15787 / PB90-1).